The chain runs to 265 residues: 2-Cys peroxiredoxin BAS1, chloroplastic (265 aa).

The N-terminal 65 residues, 1–65, are a transit peptide targeting the chloroplast; sequence MACVASSTTL…SSTSRRSFAV (65 aa). The 160-residue stretch at 73–232 folds into the Thioredoxin domain; that stretch reads PLVGNKAPDF…TMRTLQALQY (160 aa). Catalysis depends on Cys119, which acts as the Cysteine sulfenic acid (-SOH) intermediate.

Belongs to the peroxiredoxin family. AhpC/Prx1 subfamily. As to quaternary structure, homodimer; disulfide-linked, upon oxidation.

The protein localises to the plastid. It is found in the chloroplast. It carries out the reaction a hydroperoxide + [thioredoxin]-dithiol = an alcohol + [thioredoxin]-disulfide + H2O. In terms of biological role, thiol-specific peroxidase that catalyzes the reduction of hydrogen peroxide and organic hydroperoxides to water and alcohols, respectively. Plays a role in cell protection against oxidative stress by detoxifying peroxides. May be an antioxidant enzyme particularly in the developing shoot and photosynthesizing leaf. This Spinacia oleracea (Spinach) protein is 2-Cys peroxiredoxin BAS1, chloroplastic (BAS1).